The primary structure comprises 147 residues: Large ribosomal subunit protein uL11 (147 aa).

The protein belongs to the universal ribosomal protein uL11 family. Part of the ribosomal stalk of the 50S ribosomal subunit. Interacts with L10 and the large rRNA to form the base of the stalk. L10 forms an elongated spine to which L12 dimers bind in a sequential fashion forming a multimeric L10(L12)X complex. In terms of processing, one or more lysine residues are methylated.

In terms of biological role, forms part of the ribosomal stalk which helps the ribosome interact with GTP-bound translation factors. In Bacteroides fragilis (strain ATCC 25285 / DSM 2151 / CCUG 4856 / JCM 11019 / LMG 10263 / NCTC 9343 / Onslow / VPI 2553 / EN-2), this protein is Large ribosomal subunit protein uL11.